Here is a 130-residue protein sequence, read N- to C-terminus: MSMQDPIADMLTRIRNGQAANKVAVTMPSSKLKVAIANVLKEEGFIEDFKIEGGTKPVLELVLKYFQGNAVVESIQRISRPGLRIYKKKDELPKVMAGLGIAVVSTSKGVMTDRAARQAGLGGEIICYVA.

The protein belongs to the universal ribosomal protein uS8 family. In terms of assembly, part of the 30S ribosomal subunit. Contacts proteins S5 and S12.

One of the primary rRNA binding proteins, it binds directly to 16S rRNA central domain where it helps coordinate assembly of the platform of the 30S subunit. The protein is Small ribosomal subunit protein uS8 of Buchnera aphidicola subsp. Acyrthosiphon kondoi (Acyrthosiphon kondoi symbiotic bacterium).